The primary structure comprises 629 residues: mRNA cleavage and polyadenylation factor CLP1 (629 aa).

Residues Glu21 and Lys72 each contribute to the ATP site. The interval 142–166 (YIAPRTTDPNTETESDPSGTAAATV) is disordered. Positions 148-159 (TDPNTETESDPS) are enriched in polar residues. 183–188 (SAGKTS) lines the ATP pocket. Residues 562-582 (PPRGGGGAGQPDSSTNPTDDE) form a disordered region.

It belongs to the Clp1 family. Clp1 subfamily. In terms of assembly, component of a pre-mRNA cleavage factor complex. Interacts directly with PCF11.

The protein localises to the nucleus. Functionally, required for endonucleolytic cleavage during polyadenylation-dependent pre-mRNA 3'-end formation. The chain is mRNA cleavage and polyadenylation factor CLP1 from Mycosarcoma maydis (Corn smut fungus).